Reading from the N-terminus, the 467-residue chain is Uronate isomerase (467 aa).

Belongs to the metallo-dependent hydrolases superfamily. Uronate isomerase family.

The catalysed reaction is D-glucuronate = D-fructuronate. It catalyses the reaction aldehydo-D-galacturonate = keto-D-tagaturonate. It functions in the pathway carbohydrate metabolism; pentose and glucuronate interconversion. In Actinobacillus succinogenes (strain ATCC 55618 / DSM 22257 / CCUG 43843 / 130Z), this protein is Uronate isomerase.